The primary structure comprises 121 residues: Large ribosomal subunit protein bL12 (121 aa).

The protein belongs to the bacterial ribosomal protein bL12 family. Homodimer. Part of the ribosomal stalk of the 50S ribosomal subunit. Forms a multimeric L10(L12)X complex, where L10 forms an elongated spine to which 2 to 4 L12 dimers bind in a sequential fashion. Binds GTP-bound translation factors.

Its function is as follows. Forms part of the ribosomal stalk which helps the ribosome interact with GTP-bound translation factors. Is thus essential for accurate translation. This chain is Large ribosomal subunit protein bL12, found in Streptococcus pyogenes serotype M3 (strain ATCC BAA-595 / MGAS315).